Consider the following 121-residue polypeptide: Large ribosomal subunit protein bL12 (121 aa).

It belongs to the bacterial ribosomal protein bL12 family. As to quaternary structure, homodimer. Part of the ribosomal stalk of the 50S ribosomal subunit. Forms a multimeric L10(L12)X complex, where L10 forms an elongated spine to which 2 to 4 L12 dimers bind in a sequential fashion. Binds GTP-bound translation factors.

Functionally, forms part of the ribosomal stalk which helps the ribosome interact with GTP-bound translation factors. Is thus essential for accurate translation. In Klebsiella pneumoniae (strain 342), this protein is Large ribosomal subunit protein bL12.